The primary structure comprises 542 residues: Chaperonin GroEL 2 (542 aa).

ATP-binding positions include Thr-29–Pro-32, Asp-86–Thr-90, Gly-413, Asn-477–Ala-479, and Asp-493.

Belongs to the chaperonin (HSP60) family. In terms of assembly, forms a cylinder of 14 subunits composed of two heptameric rings stacked back-to-back. Interacts with the co-chaperonin GroES.

It localises to the cytoplasm. It carries out the reaction ATP + H2O + a folded polypeptide = ADP + phosphate + an unfolded polypeptide.. Together with its co-chaperonin GroES, plays an essential role in assisting protein folding. The GroEL-GroES system forms a nano-cage that allows encapsulation of the non-native substrate proteins and provides a physical environment optimized to promote and accelerate protein folding. The sequence is that of Chaperonin GroEL 2 from Kineococcus radiotolerans (strain ATCC BAA-149 / DSM 14245 / SRS30216).